The primary structure comprises 61 residues: Large ribosomal subunit protein uL30 (61 aa).

Residues 1-20 (MSQKKVTVRQVGSPIGRKPE) form a disordered region.

It belongs to the universal ribosomal protein uL30 family. In terms of assembly, part of the 50S ribosomal subunit.

In Hyphomonas neptunium (strain ATCC 15444), this protein is Large ribosomal subunit protein uL30.